The sequence spans 232 residues: Ribose-5-phosphate isomerase A (232 aa).

Substrate-binding positions include 28-31 (TGST), 83-86 (DGAD), and 96-99 (KGGG). The Proton acceptor role is filled by E105. K123 is a substrate binding site.

The protein belongs to the ribose 5-phosphate isomerase family. As to quaternary structure, homodimer.

It catalyses the reaction aldehydo-D-ribose 5-phosphate = D-ribulose 5-phosphate. The protein operates within carbohydrate degradation; pentose phosphate pathway; D-ribose 5-phosphate from D-ribulose 5-phosphate (non-oxidative stage): step 1/1. In terms of biological role, catalyzes the reversible conversion of ribose-5-phosphate to ribulose 5-phosphate. The sequence is that of Ribose-5-phosphate isomerase A from Rhodopseudomonas palustris (strain BisB18).